A 293-amino-acid chain; its full sequence is Zinc finger protein 80 (293 aa).

C2H2-type zinc fingers lie at residues 69-91 (YKCK…HQIH) and 97-119 (YECQ…MRIH). Residues 125–147 (CKCVECGKVFNRRSHLLCYHQIH) form a C2H2-type 3; atypical zinc finger. 4 consecutive C2H2-type zinc fingers follow at residues 153-175 (YECS…RMTH), 181-203 (FGCK…MKIH), 209-231 (YKCG…SMTH), and 237-259 (YECK…TRSH).

It belongs to the krueppel C2H2-type zinc-finger protein family.

It is found in the nucleus. Its function is as follows. May be involved in transcriptional regulation. The chain is Zinc finger protein 80 (ZNF80) from Macaca mulatta (Rhesus macaque).